Here is a 434-residue protein sequence, read N- to C-terminus: Serine hydroxymethyltransferase (434 aa).

Residues leucine 133 and 137-139 contribute to the (6S)-5,6,7,8-tetrahydrofolate site; that span reads GHL. The residue at position 242 (lysine 242) is an N6-(pyridoxal phosphate)lysine. Residue 366–368 participates in (6S)-5,6,7,8-tetrahydrofolate binding; it reads SPF.

Belongs to the SHMT family. In terms of assembly, homodimer. Pyridoxal 5'-phosphate is required as a cofactor.

It is found in the cytoplasm. The catalysed reaction is (6R)-5,10-methylene-5,6,7,8-tetrahydrofolate + glycine + H2O = (6S)-5,6,7,8-tetrahydrofolate + L-serine. Its pathway is one-carbon metabolism; tetrahydrofolate interconversion. The protein operates within amino-acid biosynthesis; glycine biosynthesis; glycine from L-serine: step 1/1. Functionally, catalyzes the reversible interconversion of serine and glycine with tetrahydrofolate (THF) serving as the one-carbon carrier. This reaction serves as the major source of one-carbon groups required for the biosynthesis of purines, thymidylate, methionine, and other important biomolecules. Also exhibits THF-independent aldolase activity toward beta-hydroxyamino acids, producing glycine and aldehydes, via a retro-aldol mechanism. In Erythrobacter litoralis (strain HTCC2594), this protein is Serine hydroxymethyltransferase.